Reading from the N-terminus, the 1235-residue chain is ATP-dependent helicase/nuclease subunit A (1235 aa).

In terms of domain architecture, UvrD-like helicase ATP-binding spans Ser12–Arg482. An ATP-binding site is contributed by Ala33–Thr40. Positions Ala509–Gly800 constitute a UvrD-like helicase C-terminal domain.

The protein belongs to the helicase family. AddA subfamily. Heterodimer of AddA and AddB/RexB. Requires Mg(2+) as cofactor.

It catalyses the reaction Couples ATP hydrolysis with the unwinding of duplex DNA by translocating in the 3'-5' direction.. The catalysed reaction is ATP + H2O = ADP + phosphate + H(+). Its function is as follows. The heterodimer acts as both an ATP-dependent DNA helicase and an ATP-dependent, dual-direction single-stranded exonuclease. Recognizes the chi site generating a DNA molecule suitable for the initiation of homologous recombination. The AddA nuclease domain is required for chi fragment generation; this subunit has the helicase and 3' -&gt; 5' nuclease activities. This chain is ATP-dependent helicase/nuclease subunit A, found in Listeria monocytogenes serotype 4b (strain F2365).